Reading from the N-terminus, the 408-residue chain is Snake venom 5'-nucleotidase (408 aa).

His-54 and His-77 together coordinate Zn(2+). N-linked (GlcNAc...) asparagine glycosylation is found at Asn-167 and Asn-181. 2 disulfide bridges follow: Cys-187/Cys-192 and Cys-199/Cys-221. Arg-188 serves as a coordination point for AMP. Positions 224, 229, and 252 each coordinate AMP. Cys-311 and Cys-314 form a disulfide bridge. Residues Phe-335 and Asp-341 each contribute to the AMP site. Propeptides (removed in mature form) lie at residues 385–388 (DGTL) and 385–408 (DGTLFQAQLFLTWGLCISLLFFIL).

It belongs to the 5'-nucleotidase family. As to quaternary structure, homodimer. In terms of processing, venom 5'-nucleotidases (or a part thereof) may be released into the venom via exosome-like vesicles. They may be attached via a GPI anchor to the membrane of these vesicles. Soluble forms of 5'-nucleotidase might be released by cleavage of the ectodomain in the exosome-like vesicles or venom gland cells. In terms of tissue distribution, expressed by the venom gland.

The protein localises to the membrane. It carries out the reaction a ribonucleoside 5'-phosphate + H2O = a ribonucleoside + phosphate. The enzyme catalyses AMP + H2O = adenosine + phosphate. The catalysed reaction is GMP + H2O = guanosine + phosphate. It catalyses the reaction ADP + H2O = AMP + phosphate + H(+). Its activity is regulated as follows. Is potently inhibited by metal ions Fe(3+), Cu(2+) and Zn(2+). Is enhanced by Mn(2+). Ca(2+) and Mg(2+) have no effect. In terms of biological role, hydrolyzes nucleotides into nucleosides. Prefers AMP as the substrate but also cleaves GMP and ADP. Does not affect AMP, cAMP and cGMP. Inhibits ADP- and collagen-induced platelet aggregation. Snake venom 5'-nucleotidases are widely distributed among venomous snake taxa, but there is a lack of information about their biological activities. They have been shown to inhibit platelet aggregation. This effect may be due to the liberation of inhibitory AMP or adenosine by its action on ADP released upon initiation of aggregation. Venom 5'-nucleotidases are also known to synergistically act in vivo with other toxins like ADPases, phospholipases, and disintegrins to exert a more pronounced anti-coagulant effect. In Macrovipera lebetinus (Levantine viper), this protein is Snake venom 5'-nucleotidase.